Here is a 509-residue protein sequence, read N- to C-terminus: 2,3-bisphosphoglycerate-independent phosphoglycerate mutase (509 aa).

Aspartate 11 lines the Mn(2+) pocket. Tyrosine 35 is modified (phosphotyrosine). Serine 61 serves as a coordination point for Mn(2+). The Phosphoserine intermediate role is filled by serine 61. Substrate-binding positions include histidine 122, arginine 152–aspartate 153, arginine 184, arginine 190, arginine 260–arginine 263, and lysine 335. Mn(2+)-binding residues include aspartate 402, histidine 406, aspartate 443, histidine 444, and histidine 461.

The protein belongs to the BPG-independent phosphoglycerate mutase family. Monomer. The cofactor is Mn(2+).

It carries out the reaction (2R)-2-phosphoglycerate = (2R)-3-phosphoglycerate. The protein operates within carbohydrate degradation; glycolysis; pyruvate from D-glyceraldehyde 3-phosphate: step 3/5. Its function is as follows. Essential for rapid growth and for sporulation. Catalyzes the interconversion of 2-phosphoglycerate and 3-phosphoglycerate. The chain is 2,3-bisphosphoglycerate-independent phosphoglycerate mutase from Bacillus anthracis.